We begin with the raw amino-acid sequence, 102 residues long: ATP-dependent Clp protease adapter protein ClpS (102 aa).

Belongs to the ClpS family. Binds to the N-terminal domain of the chaperone ClpA.

Its function is as follows. Involved in the modulation of the specificity of the ClpAP-mediated ATP-dependent protein degradation. This chain is ATP-dependent Clp protease adapter protein ClpS, found in Shewanella pealeana (strain ATCC 700345 / ANG-SQ1).